We begin with the raw amino-acid sequence, 360 residues long: Epoxyqueuosine reductase (360 aa).

The Proton donor role is filled by D142. In terms of domain architecture, 4Fe-4S ferredoxin-type spans 187–216 (APTEPVTAHCGSCQACMDVCPTQAIVAPHR). [4Fe-4S] cluster contacts are provided by C196, C199, C202, C206, C222, C249, C252, and C256.

The protein belongs to the QueG family. As to quaternary structure, monomer. The cofactor is cob(II)alamin. Requires [4Fe-4S] cluster as cofactor.

Its subcellular location is the cytoplasm. It catalyses the reaction epoxyqueuosine(34) in tRNA + AH2 = queuosine(34) in tRNA + A + H2O. It participates in tRNA modification; tRNA-queuosine biosynthesis. Catalyzes the conversion of epoxyqueuosine (oQ) to queuosine (Q), which is a hypermodified base found in the wobble positions of tRNA(Asp), tRNA(Asn), tRNA(His) and tRNA(Tyr). The chain is Epoxyqueuosine reductase from Alicycliphilus denitrificans (strain DSM 14773 / CIP 107495 / K601).